A 548-amino-acid polypeptide reads, in one-letter code: Probable sucrose-6-phosphate hydrolase (548 aa).

Substrate-binding positions include 105 to 108, Gln124, 167 to 168, 228 to 229, and Glu283; these read LLND, FS, and RD. Asp108 is an active-site residue.

This sequence belongs to the glycosyl hydrolase 32 family.

The protein localises to the cytoplasm. It carries out the reaction Hydrolysis of terminal non-reducing beta-D-fructofuranoside residues in beta-D-fructofuranosides.. Its pathway is glycan biosynthesis; sucrose metabolism. In terms of biological role, enables the bacterium to metabolize sucrose as a sole carbon source. The sequence is that of Probable sucrose-6-phosphate hydrolase from Vibrio cholerae serotype O1 (strain ATCC 39315 / El Tor Inaba N16961).